The chain runs to 249 residues: Phosphate import ATP-binding protein PstB 3 (249 aa).

One can recognise an ABC transporter domain in the interval 4–244 (LVINNLDLYY…PQDERTENYI (241 aa)). 36–43 (GPSGCGKS) is a binding site for ATP.

This sequence belongs to the ABC transporter superfamily. Phosphate importer (TC 3.A.1.7) family. As to quaternary structure, the complex is composed of two ATP-binding proteins (PstB), two transmembrane proteins (PstC and PstA) and a solute-binding protein (PstS).

It is found in the cell membrane. It catalyses the reaction phosphate(out) + ATP + H2O = ADP + 2 phosphate(in) + H(+). Part of the ABC transporter complex PstSACB involved in phosphate import. Responsible for energy coupling to the transport system. In Streptococcus agalactiae serotype Ia (strain ATCC 27591 / A909 / CDC SS700), this protein is Phosphate import ATP-binding protein PstB 3.